Here is a 686-residue protein sequence, read N- to C-terminus: Methionine--tRNA ligase (686 aa).

Residues 13 to 23 (PYANGQIHIGH) carry the 'HIGH' region motif. Residues cysteine 144, cysteine 147, cysteine 157, and cysteine 160 each coordinate Zn(2+). The short motif at 335–339 (KMSKS) is the 'KMSKS' region element. Lysine 338 is a binding site for ATP. The tRNA-binding domain maps to 580 to 686 (DFAKVDLRVA…EGAVPGMRIG (107 aa)).

It belongs to the class-I aminoacyl-tRNA synthetase family. MetG type 1 subfamily. As to quaternary structure, homodimer. Zn(2+) serves as cofactor.

Its subcellular location is the cytoplasm. The catalysed reaction is tRNA(Met) + L-methionine + ATP = L-methionyl-tRNA(Met) + AMP + diphosphate. In terms of biological role, is required not only for elongation of protein synthesis but also for the initiation of all mRNA translation through initiator tRNA(fMet) aminoacylation. This is Methionine--tRNA ligase from Cupriavidus necator (strain ATCC 17699 / DSM 428 / KCTC 22496 / NCIMB 10442 / H16 / Stanier 337) (Ralstonia eutropha).